The primary structure comprises 213 residues: dTTP/UTP pyrophosphatase (213 aa).

The active-site Proton acceptor is the D92.

This sequence belongs to the Maf family. YhdE subfamily. The cofactor is a divalent metal cation.

The protein resides in the cytoplasm. The catalysed reaction is dTTP + H2O = dTMP + diphosphate + H(+). The enzyme catalyses UTP + H2O = UMP + diphosphate + H(+). Functionally, nucleoside triphosphate pyrophosphatase that hydrolyzes dTTP and UTP. May have a dual role in cell division arrest and in preventing the incorporation of modified nucleotides into cellular nucleic acids. The sequence is that of dTTP/UTP pyrophosphatase from Granulibacter bethesdensis (strain ATCC BAA-1260 / CGDNIH1).